The sequence spans 1197 residues: ATP-dependent helicase/nuclease subunit A (1197 aa).

The region spanning 2–458 (KNWTTEQQAA…IDLAKNFRSR (457 aa)) is the UvrD-like helicase ATP-binding domain. An ATP-binding site is contributed by 23 to 30 (AAAGSGKT). Residues 485–774 (RAALYQGASF…RIMSIHKSKG (290 aa)) form the UvrD-like helicase C-terminal domain.

The protein belongs to the helicase family. AddA subfamily. As to quaternary structure, heterodimer of AddA and AddB/RexB. The cofactor is Mg(2+).

The catalysed reaction is Couples ATP hydrolysis with the unwinding of duplex DNA by translocating in the 3'-5' direction.. The enzyme catalyses ATP + H2O = ADP + phosphate + H(+). Its function is as follows. The heterodimer acts as both an ATP-dependent DNA helicase and an ATP-dependent, dual-direction single-stranded exonuclease. Recognizes the chi site generating a DNA molecule suitable for the initiation of homologous recombination. The AddA nuclease domain is required for chi fragment generation; this subunit has the helicase and 3' -&gt; 5' nuclease activities. The chain is ATP-dependent helicase/nuclease subunit A from Alkaliphilus metalliredigens (strain QYMF).